The primary structure comprises 480 residues: Histone deacetylase 1 (480 aa).

Positions 9-321 (RKVCYYYDGD…WTYETAVALD (313 aa)) are histone deacetylase. Gly-27 and Lys-31 together coordinate 1D-myo-inositol 1,4,5,6-tetrakisphosphate. Residue His-141 is part of the active site. Positions 176, 178, and 264 each coordinate Zn(2+). A 1D-myo-inositol 1,4,5,6-tetrakisphosphate-binding site is contributed by Arg-270. Residues 376-480 (APGVQMQPIP…KGVKEETKST (105 aa)) form a disordered region. A compositionally biased stretch (acidic residues) spans 388-400 (AVQEDSGDEEEED). A compositionally biased stretch (basic and acidic residues) spans 401-416 (PEKRISIRNSDKRISC). Residues 417–427 (DEEFSDSEDEG) are compositionally biased toward acidic residues. Residues 455–480 (KDEKEEEKAKEEKAEPKGVKEETKST) are compositionally biased toward basic and acidic residues.

The protein belongs to the histone deacetylase family. HD type 1 subfamily. It depends on Zn(2+) as a cofactor.

The protein localises to the nucleus. The catalysed reaction is N(6)-acetyl-L-lysyl-[histone] + H2O = L-lysyl-[histone] + acetate. It carries out the reaction N(6)-acetyl-L-lysyl-[protein] + H2O = L-lysyl-[protein] + acetate. The enzyme catalyses N(6)-(2E)-butenoyl-L-lysyl-[protein] + H2O = (2E)-2-butenoate + L-lysyl-[protein]. It catalyses the reaction N(6)-[(S)-lactoyl]-L-lysyl-[protein] + H2O = (S)-lactate + L-lysyl-[protein]. Inositol tetraphosphate (1D-myo-inositol 1,4,5,6-tetrakisphosphate) may act as an intermolecular glue between HDAC1 and N-Cor repressor complex components. Histone deacetylase that catalyzes the deacetylation of lysine residues on the N-terminal part of the core histones (H2A, H2B, H3 and H4). Histone deacetylation gives a tag for epigenetic repression and plays an important role in transcriptional regulation, cell cycle progression and developmental events. Histone deacetylases act via the formation of large multiprotein complexes. Also functions as a deacetylase for non-histone proteins. In addition to protein deacetylase activity, also has protein-lysine deacylase activity: acts as a protein decrotonylase and delactylase by mediating decrotonylation ((2E)-butenoyl) and delactylation (lactoyl) of histones, respectively. This Gallus gallus (Chicken) protein is Histone deacetylase 1 (HDAC1).